Reading from the N-terminus, the 322-residue chain is DNA repair and recombination protein RadA (322 aa).

Position 105–112 (105–112) interacts with ATP; sequence GMYGSGKT.

It belongs to the eukaryotic RecA-like protein family.

Functionally, involved in DNA repair and in homologous recombination. Binds and assemble on single-stranded DNA to form a nucleoprotein filament. Hydrolyzes ATP in a ssDNA-dependent manner and promotes DNA strand exchange between homologous DNA molecules. This is DNA repair and recombination protein RadA from Methanococcus maripaludis (strain C5 / ATCC BAA-1333).